The sequence spans 184 residues: UPF0149 protein PSEEN5316 (184 aa).

This sequence belongs to the UPF0149 family.

The polypeptide is UPF0149 protein PSEEN5316 (Pseudomonas entomophila (strain L48)).